Consider the following 309-residue polypeptide: Ribonuclease Z (309 aa).

Residues His63, His65, Asp67, His68, His145, Asp216, and His274 each contribute to the Zn(2+) site. Asp67 functions as the Proton acceptor in the catalytic mechanism.

Belongs to the RNase Z family. As to quaternary structure, homodimer. The cofactor is Zn(2+).

The catalysed reaction is Endonucleolytic cleavage of RNA, removing extra 3' nucleotides from tRNA precursor, generating 3' termini of tRNAs. A 3'-hydroxy group is left at the tRNA terminus and a 5'-phosphoryl group is left at the trailer molecule.. Functionally, zinc phosphodiesterase, which displays some tRNA 3'-processing endonuclease activity. Probably involved in tRNA maturation, by removing a 3'-trailer from precursor tRNA. The protein is Ribonuclease Z of Streptococcus equi subsp. equi (strain 4047).